A 378-amino-acid polypeptide reads, in one-letter code: tRNA (guanine(26)-N(2))-dimethyltransferase (378 aa).

In terms of domain architecture, Trm1 methyltransferase spans 4 to 374 (KEVTEGKVRI…KEYEEITKCI (371 aa)). 5 residues coordinate S-adenosyl-L-methionine: arginine 44, arginine 69, aspartate 87, aspartate 114, and alanine 115. Residues cysteine 246, cysteine 249, cysteine 263, and cysteine 266 each contribute to the Zn(2+) site.

This sequence belongs to the class I-like SAM-binding methyltransferase superfamily. Trm1 family.

The catalysed reaction is guanosine(26) in tRNA + 2 S-adenosyl-L-methionine = N(2)-dimethylguanosine(26) in tRNA + 2 S-adenosyl-L-homocysteine + 2 H(+). Dimethylates a single guanine residue at position 26 of a number of tRNAs using S-adenosyl-L-methionine as donor of the methyl groups. This chain is tRNA (guanine(26)-N(2))-dimethyltransferase, found in Saccharolobus solfataricus (strain ATCC 35092 / DSM 1617 / JCM 11322 / P2) (Sulfolobus solfataricus).